We begin with the raw amino-acid sequence, 196 residues long: Ribosome maturation factor RimP (196 aa).

The segment at 164–196 (LAPQKPNKPGPKKPGHDKKKPSNEPAAGKPRAE) is disordered. Residues 173 to 182 (GPKKPGHDKK) are compositionally biased toward basic residues.

The protein belongs to the RimP family.

It localises to the cytoplasm. Its function is as follows. Required for maturation of 30S ribosomal subunits. This Xanthomonas campestris pv. campestris (strain B100) protein is Ribosome maturation factor RimP.